The primary structure comprises 294 residues: MLKGALTALITPFNENGSVDEETFCNFIEWQITQGIDGLIPAGTTGESPTLSHEEHKKVIELCVEKVAKRVPVVAGAGSNSTDEAVELAQHAKKAGADAVLVVTPYYNKPNQEGIYSHFATIAKAVSIPIVIYNIPGRSVVDMAVETMKDLCQNFKNIIGVKDSTGNIERVSEQREKCGKDFVQLSGDDQTALGFNAHGGVGCVSVASNVAPKLCAELYAACRSGDYKTALELNDRLMPLNRSIFIEPSPSGIKYAVAKLGFCRDTVRLPLVPLKDTTKEIIDAALQHAGLIKE.

T45 lines the pyruvate pocket. The active-site Proton donor/acceptor is the Y133. K162 serves as the catalytic Schiff-base intermediate with substrate. V204 contacts pyruvate.

Belongs to the DapA family. Homotetramer; dimer of dimers.

It localises to the cytoplasm. The catalysed reaction is L-aspartate 4-semialdehyde + pyruvate = (2S,4S)-4-hydroxy-2,3,4,5-tetrahydrodipicolinate + H2O + H(+). It functions in the pathway amino-acid biosynthesis; L-lysine biosynthesis via DAP pathway; (S)-tetrahydrodipicolinate from L-aspartate: step 3/4. Its function is as follows. Catalyzes the condensation of (S)-aspartate-beta-semialdehyde [(S)-ASA] and pyruvate to 4-hydroxy-tetrahydrodipicolinate (HTPA). In Bartonella bacilliformis (strain ATCC 35685 / KC583 / Herrer 020/F12,63), this protein is 4-hydroxy-tetrahydrodipicolinate synthase.